Here is a 527-residue protein sequence, read N- to C-terminus: EGF domain-specific O-linked N-acetylglucosamine transferase (527 aa).

The signal sequence occupies residues 1–17 (MFMLLVFGALLPEVPLS). Residues 295–297 (DYD) carry the Required for optimal activity motif. An N-linked (GlcNAc...) asparagine glycan is attached at Asn-354. The short motif at 524–527 (HDEL) is the Prevents secretion from ER element.

Belongs to the glycosyltransferase 61 family.

It is found in the endoplasmic reticulum lumen. It catalyses the reaction L-seryl-[protein] + UDP-N-acetyl-alpha-D-glucosamine = 3-O-(N-acetyl-beta-D-glucosaminyl)-L-seryl-[protein] + UDP + H(+). The catalysed reaction is L-threonyl-[protein] + UDP-N-acetyl-alpha-D-glucosamine = 3-O-(N-acetyl-beta-D-glucosaminyl)-L-threonyl-[protein] + UDP + H(+). Its function is as follows. Catalyzes the transfer of a single N-acetylglucosamine from UDP-GlcNAc to a serine or threonine residue in extracellular proteins resulting in their modification with a beta-linked N-acetylglucosamine (O-GlcNAc). Specifically glycosylates the Thr residue located between the fifth and sixth conserved cysteines of folded EGF-like domains. The chain is EGF domain-specific O-linked N-acetylglucosamine transferase (EOGT) from Bos taurus (Bovine).